We begin with the raw amino-acid sequence, 183 residues long: Capsid protein (183 aa).

Residues Asn-136–Cys-183 are disordered. The span at Val-149–Ser-176 shows a compositional bias: basic residues. A phosphoserine; by host mark is found at Ser-155, Ser-162, and Ser-170. The 1; half-length repeat unit spans residues Ser-155–Pro-161. The tract at residues Ser-155–Gln-177 is 3 X 8 AA repeats of S-P-R-R-R-[PR]-S-Q. Residues Arg-158–Arg-175 carry the Bipartite nuclear localization signal motif. 2 tandem repeats follow at residues Ser-162 to Gln-169 and Ser-170 to Gln-177. The segment at Gln-177 to Cys-183 is RNA binding.

It belongs to the orthohepadnavirus core antigen family. In terms of assembly, homodimerizes, then multimerizes. Interacts with cytosol exposed regions of viral L glycoprotein present in the reticulum-to-Golgi compartment. Interacts with human FLNB. Phosphorylated form interacts with host importin alpha; this interaction depends on the exposure of the NLS, which itself depends upon genome maturation and/or phosphorylation of the capsid protein. Interacts with host NUP153. Post-translationally, phosphorylated by host SRPK1, SRPK2, and maybe protein kinase C or GAPDH. Phosphorylation is critical for pregenomic RNA packaging. Protein kinase C phosphorylation is stimulated by HBx protein and may play a role in transport of the viral genome to the nucleus at the late step during the viral replication cycle.

It is found in the virion. Its subcellular location is the host cytoplasm. Functionally, self assembles to form an icosahedral capsid. Most capsids appear to be large particles with an icosahedral symmetry of T=4 and consist of 240 copies of capsid protein, though a fraction forms smaller T=3 particles consisting of 180 capsid proteins. Entering capsids are transported along microtubules to the nucleus. Phosphorylation of the capsid is thought to induce exposure of nuclear localization signal in the C-terminal portion of the capsid protein that allows binding to the nuclear pore complex via the importin (karyopherin-) alpha and beta. Capsids are imported in intact form through the nuclear pore into the nuclear basket, where it probably binds NUP153. Only capsids that contain the mature viral genome can release the viral DNA and capsid protein into the nucleoplasm. Immature capsids get stuck in the basket. Capsids encapsulate the pre-genomic RNA and the P protein. Pre-genomic RNA is reverse-transcribed into DNA while the capsid is still in the cytoplasm. The capsid can then either be directed to the nucleus, providing more genomes for transcription, or bud through the endoplasmic reticulum to provide new virions. The chain is Capsid protein from Hepatitis B virus genotype F2 (isolate Brazil/w4B) (HBV-F).